Reading from the N-terminus, the 275-residue chain is 3-methyl-2-oxobutanoate hydroxymethyltransferase (275 aa).

The Mg(2+) site is built by Asp-44 and Asp-83. 3-methyl-2-oxobutanoate is bound by residues Asp-44 to Ser-45, Asp-83, and Lys-113. Residue Glu-115 participates in Mg(2+) binding. The active-site Proton acceptor is Glu-182.

This sequence belongs to the PanB family. In terms of assembly, homodecamer; pentamer of dimers. The cofactor is Mg(2+).

It localises to the cytoplasm. The enzyme catalyses 3-methyl-2-oxobutanoate + (6R)-5,10-methylene-5,6,7,8-tetrahydrofolate + H2O = 2-dehydropantoate + (6S)-5,6,7,8-tetrahydrofolate. It participates in cofactor biosynthesis; (R)-pantothenate biosynthesis; (R)-pantoate from 3-methyl-2-oxobutanoate: step 1/2. Its function is as follows. Catalyzes the reversible reaction in which hydroxymethyl group from 5,10-methylenetetrahydrofolate is transferred onto alpha-ketoisovalerate to form ketopantoate. This chain is 3-methyl-2-oxobutanoate hydroxymethyltransferase, found in Clostridium novyi (strain NT).